The primary structure comprises 279 residues: Vacuolar iron transporter cccA (279 aa).

The interval 1 to 44 (MLGGRHSHWSPQDLEEQAFSPYGTFPPSPTESTETSSSISSTRP) is disordered. The span at 30–44 (TESTETSSSISSTRP) shows a compositional bias: low complexity. The next 5 helical transmembrane spans lie at 55 to 75 (ILGL…LSAL), 80 to 100 (VVVV…GLGG), 185 to 205 (ITLA…YFMV), 208 to 228 (VLVA…VFGY), and 243 to 263 (IVAG…AAGA).

This sequence belongs to the CCC1 family.

Its subcellular location is the vacuole membrane. The enzyme catalyses Fe(2+)(in) = Fe(2+)(out). Vacuolar iron transporter involved in the transfer of iron from the cytosol to the vacuole for intracellular iron storage. Plays an essential role in iron detoxification during high iron conditions. The polypeptide is Vacuolar iron transporter cccA (Arthroderma benhamiae (strain ATCC MYA-4681 / CBS 112371) (Trichophyton mentagrophytes)).